The sequence spans 140 residues: L-fucose mutarotase (140 aa).

The Proton donor role is filled by His-22. Residues Asp-30, Arg-107, and 129–131 each bind substrate; that span reads YGN.

It belongs to the RbsD / FucU family. FucU mutarotase subfamily. Homodecamer.

Its subcellular location is the cytoplasm. The enzyme catalyses alpha-L-fucose = beta-L-fucose. It participates in carbohydrate metabolism; L-fucose metabolism. Its function is as follows. Involved in the anomeric conversion of L-fucose. This is L-fucose mutarotase from Salmonella paratyphi B (strain ATCC BAA-1250 / SPB7).